Reading from the N-terminus, the 282-residue chain is Homeobox protein Hox-C12 (282 aa).

Disordered stretches follow at residues 94 to 129 (YYREPCAEGGGGGLKREERGRDPGAGPGAALLPLEP) and 147 to 214 (GGDG…NSRS). The span at 162 to 175 (SCQSLESDSSSSLL) shows a compositional bias: low complexity. The homeobox DNA-binding region spans 214 to 273 (SRKKRKPYSKLQLAELEGEFLVNEFITRQRRRELSDRLNLSDQQVKIWFQNRRMKKKRLL).

Belongs to the Abd-B homeobox family.

The protein localises to the nucleus. In terms of biological role, sequence-specific transcription factor which is part of a developmental regulatory system that provides cells with specific positional identities on the anterior-posterior axis. The sequence is that of Homeobox protein Hox-C12 (HOXC12) from Homo sapiens (Human).